The following is a 663-amino-acid chain: Rap1 GTPase-activating protein 1 (663 aa).

A GoLoco domain is found at 1 to 17 (MIEKMQGSRMDEQRCSF). A disordered region spans residues 1–23 (MIEKMQGSRMDEQRCSFPPPLKT). F17 is modified (phosphoserine). Residues 181-397 (IVTFDEHVIS…RTRAALLETL (217 aa)) form the Rap-GAP domain. S441 carries the post-translational modification Phosphoserine. Disordered regions lie at residues 442 to 604 (MDAM…PHKR) and 616 to 645 (SVST…PACP). Over residues 450–465 (KKPNTVSTSHSGSFAP) the composition is skewed to polar residues. A phosphoserine mark is found at S484, S499, S515, S541, and S542. Positions 535 to 549 (ENSSTQSSPEMPTTK) are enriched in polar residues. The segment covering 567–579 (RSSSSASSFASVV) has biased composition (low complexity). The span at 580-591 (EETEGVDGEDTG) shows a compositional bias: acidic residues. A compositionally biased stretch (low complexity) spans 616–630 (SVSTTSGGSSPGPSR).

In terms of assembly, homodimer and heterodimer with RAP1B. As to expression, significant expression seen in the brain, kidney and pancreas. Abundant in the cerebral cortex and expressed at much lower levels in the spinal cord. Not detected in the lymphoid tissues.

The protein localises to the golgi apparatus membrane. Functionally, GTPase activator for the nuclear Ras-related regulatory protein RAP-1A (KREV-1), converting it to the putatively inactive GDP-bound state. This chain is Rap1 GTPase-activating protein 1 (RAP1GAP), found in Homo sapiens (Human).